Here is a 379-residue protein sequence, read N- to C-terminus: Cell division protein FtsZ (379 aa).

Residues 18 to 22 (GGGVN), 105 to 107 (GTG), Glu136, Arg140, and Asp184 each bind GTP.

Belongs to the FtsZ family. In terms of assembly, homodimer. Polymerizes to form a dynamic ring structure in a strictly GTP-dependent manner. Interacts directly with several other division proteins.

The protein resides in the cytoplasm. Its function is as follows. Essential cell division protein that forms a contractile ring structure (Z ring) at the future cell division site. The regulation of the ring assembly controls the timing and the location of cell division. One of the functions of the FtsZ ring is to recruit other cell division proteins to the septum to produce a new cell wall between the dividing cells. Binds GTP and shows GTPase activity. The chain is Cell division protein FtsZ from Mycobacterium bovis (strain ATCC BAA-935 / AF2122/97).